The following is a 1195-amino-acid chain: DNA-directed RNA polymerase subunit Rpo2 (1195 aa).

Positions 894–909 (LEEGEERLGPQRRRES) are enriched in basic and acidic residues. Positions 894-914 (LEEGEERLGPQRRRESSVTMR) are disordered. The Zn(2+) site is built by Cys1135, Cys1140, Cys1155, and Cys1158.

This sequence belongs to the RNA polymerase beta chain family. In terms of assembly, part of the RNA polymerase complex. Zn(2+) serves as cofactor.

The protein localises to the cytoplasm. The catalysed reaction is RNA(n) + a ribonucleoside 5'-triphosphate = RNA(n+1) + diphosphate. DNA-dependent RNA polymerase (RNAP) catalyzes the transcription of DNA into RNA using the four ribonucleoside triphosphates as substrates. This subunit is involved in DNA promoter recognition. In Thermoplasma acidophilum (strain ATCC 25905 / DSM 1728 / JCM 9062 / NBRC 15155 / AMRC-C165), this protein is DNA-directed RNA polymerase subunit Rpo2.